A 214-amino-acid chain; its full sequence is Probable transaldolase (214 aa).

The Schiff-base intermediate with substrate role is filled by K83.

Belongs to the transaldolase family. Type 3B subfamily.

It is found in the cytoplasm. The catalysed reaction is D-sedoheptulose 7-phosphate + D-glyceraldehyde 3-phosphate = D-erythrose 4-phosphate + beta-D-fructose 6-phosphate. It functions in the pathway carbohydrate degradation; pentose phosphate pathway; D-glyceraldehyde 3-phosphate and beta-D-fructose 6-phosphate from D-ribose 5-phosphate and D-xylulose 5-phosphate (non-oxidative stage): step 2/3. Transaldolase is important for the balance of metabolites in the pentose-phosphate pathway. This Carboxydothermus hydrogenoformans (strain ATCC BAA-161 / DSM 6008 / Z-2901) protein is Probable transaldolase.